The following is a 204-amino-acid chain: Methylthioribulose-1-phosphate dehydratase (204 aa).

2 residues coordinate Zn(2+): His-94 and His-96.

The protein belongs to the aldolase class II family. MtnB subfamily. Zn(2+) serves as cofactor.

It catalyses the reaction 5-(methylsulfanyl)-D-ribulose 1-phosphate = 5-methylsulfanyl-2,3-dioxopentyl phosphate + H2O. It functions in the pathway amino-acid biosynthesis; L-methionine biosynthesis via salvage pathway; L-methionine from S-methyl-5-thio-alpha-D-ribose 1-phosphate: step 2/6. Its function is as follows. Catalyzes the dehydration of methylthioribulose-1-phosphate (MTRu-1-P) into 2,3-diketo-5-methylthiopentyl-1-phosphate (DK-MTP-1-P). The sequence is that of Methylthioribulose-1-phosphate dehydratase from Citrobacter koseri (strain ATCC BAA-895 / CDC 4225-83 / SGSC4696).